The chain runs to 409 residues: PPE family protein PPE32 (409 aa).

This sequence belongs to the mycobacterial PPE family. As to quaternary structure, interacts with host Toll-like receptor 2 (TLR2).

It is found in the secreted. The protein localises to the cell wall. Its subcellular location is the cell surface. Virulence factor that modulates the production of host cytokines. This Mycobacterium tuberculosis (strain CDC 1551 / Oshkosh) protein is PPE family protein PPE32.